Here is a 485-residue protein sequence, read N- to C-terminus: Aspartyl/glutamyl-tRNA(Asn/Gln) amidotransferase subunit B (485 aa).

It belongs to the GatB/GatE family. GatB subfamily. As to quaternary structure, heterotrimer of A, B and C subunits.

It carries out the reaction L-glutamyl-tRNA(Gln) + L-glutamine + ATP + H2O = L-glutaminyl-tRNA(Gln) + L-glutamate + ADP + phosphate + H(+). The catalysed reaction is L-aspartyl-tRNA(Asn) + L-glutamine + ATP + H2O = L-asparaginyl-tRNA(Asn) + L-glutamate + ADP + phosphate + 2 H(+). Allows the formation of correctly charged Asn-tRNA(Asn) or Gln-tRNA(Gln) through the transamidation of misacylated Asp-tRNA(Asn) or Glu-tRNA(Gln) in organisms which lack either or both of asparaginyl-tRNA or glutaminyl-tRNA synthetases. The reaction takes place in the presence of glutamine and ATP through an activated phospho-Asp-tRNA(Asn) or phospho-Glu-tRNA(Gln). The chain is Aspartyl/glutamyl-tRNA(Asn/Gln) amidotransferase subunit B from Bordetella avium (strain 197N).